A 245-amino-acid chain; its full sequence is Leucyl/phenylalanyl-tRNA--protein transferase (245 aa).

Belongs to the L/F-transferase family.

It is found in the cytoplasm. It catalyses the reaction N-terminal L-lysyl-[protein] + L-leucyl-tRNA(Leu) = N-terminal L-leucyl-L-lysyl-[protein] + tRNA(Leu) + H(+). It carries out the reaction N-terminal L-arginyl-[protein] + L-leucyl-tRNA(Leu) = N-terminal L-leucyl-L-arginyl-[protein] + tRNA(Leu) + H(+). The catalysed reaction is L-phenylalanyl-tRNA(Phe) + an N-terminal L-alpha-aminoacyl-[protein] = an N-terminal L-phenylalanyl-L-alpha-aminoacyl-[protein] + tRNA(Phe). In terms of biological role, functions in the N-end rule pathway of protein degradation where it conjugates Leu, Phe and, less efficiently, Met from aminoacyl-tRNAs to the N-termini of proteins containing an N-terminal arginine or lysine. This is Leucyl/phenylalanyl-tRNA--protein transferase from Paraburkholderia xenovorans (strain LB400).